A 404-amino-acid chain; its full sequence is O-antigen ligase (404 aa).

Helical transmembrane passes span 16–32, 39–55, 67–84, 96–115, 127–147, 168–183, 189–221, 228–246, 324–343, 363–379, and 385–401; these read IWNKALVFLFVATYFLD, HLIIILMVITAIYQVSR, SVFYSVAVLSLILVYSIL, FENTVLEGFLLYTLLIPVLL, VLFSFLTSLGLRCLAESILYI, SMVFLFPALLNIWLFR, LVFLVLSAIYLFFILGTLSRGAWLAVLIVGVLW, WKLIGVGAILLAIIGALVI, ILYIWFSAGILGLASLVYLY, YNAHLLLFLSFVGFYIV, and QVDIAQIGIITGFLLAL.

This sequence belongs to the O-antigen ligase family.

Its subcellular location is the cell inner membrane. It carries out the reaction a lipid-linked O antigen + a lipid A-core oligosaccharide = a lipopolysaccharide + a polyisoprenyl diphosphate.. It functions in the pathway bacterial outer membrane biogenesis; lipopolysaccharide biosynthesis. Functionally, transferase involved in the biosynthesis of the lipopolysaccharide (LPS). Catalyzes the transfer of a polymerized O-antigen molecule from its polyprenyl diphosphate membrane anchor to a terminal sugar of the lipid A-core oligosaccharide, finalizing the biosynthesis of the lipopolysaccharide. May also be involved in a feedback mechanism to regulate O-unit synthesis, based on the availability of O units on the periplasmic face of the membrane. The polypeptide is O-antigen ligase (Salmonella typhimurium (strain LT2 / SGSC1412 / ATCC 700720)).